The sequence spans 306 residues: Glutaminase (306 aa).

S64, N115, E159, N166, Y190, Y242, and V260 together coordinate substrate.

Belongs to the glutaminase family. In terms of assembly, homotetramer.

The enzyme catalyses L-glutamine + H2O = L-glutamate + NH4(+). In Vibrio atlanticus (strain LGP32) (Vibrio splendidus (strain Mel32)), this protein is Glutaminase.